A 338-amino-acid polypeptide reads, in one-letter code: Mitochondrial glutathione transporter SLC25A40 (338 aa).

Solcar repeat units lie at residues 13–131 (VTPL…LSAL), 139–223 (NETC…LKKW), and 233–327 (PTFM…GKAF). 6 consecutive transmembrane segments (helical) span residues 19–39 (MLASCTGAILTSVIVTPLDVV), 103–123 (LWSGLPPTLVMAVPATVIYFT), 142–162 (CIPIVAGIVARFGAVTVISPL), 199–220 (WAPTVLRDVPFSAMYWYNYEIL), 239–259 (FTSGALSGSFAAVATLPFDVV), and 298–318 (GLFSGLIPRLIKIAPACAIMI).

This sequence belongs to the mitochondrial carrier (TC 2.A.29) family.

Its subcellular location is the mitochondrion inner membrane. The catalysed reaction is glutathione(in) = glutathione(out). Its function is as follows. Probable mitochondrial transporter required for glutathione import into mitochondria. Glutathione, which plays key roles in oxidative metabolism, is produced exclusively in the cytosol and is imported in many organelles. Mitochondrial glutathione is required for the activity and stability of proteins containing iron-sulfur clusters, as well as erythropoiesis. The polypeptide is Mitochondrial glutathione transporter SLC25A40 (Homo sapiens (Human)).